A 173-amino-acid chain; its full sequence is DRBM domain-containing protein 340R (173 aa).

The region spanning 30–102 is the DRBM domain; the sequence is NSIGFLNEFC…AFKTIKELNL (73 aa).

The chain is DRBM domain-containing protein 340R from Invertebrate iridescent virus 6 (IIV-6).